We begin with the raw amino-acid sequence, 352 residues long: S-adenosylmethionine:tRNA ribosyltransferase-isomerase (352 aa).

Belongs to the QueA family. As to quaternary structure, monomer.

Its subcellular location is the cytoplasm. It carries out the reaction 7-aminomethyl-7-carbaguanosine(34) in tRNA + S-adenosyl-L-methionine = epoxyqueuosine(34) in tRNA + adenine + L-methionine + 2 H(+). It functions in the pathway tRNA modification; tRNA-queuosine biosynthesis. In terms of biological role, transfers and isomerizes the ribose moiety from AdoMet to the 7-aminomethyl group of 7-deazaguanine (preQ1-tRNA) to give epoxyqueuosine (oQ-tRNA). This chain is S-adenosylmethionine:tRNA ribosyltransferase-isomerase, found in Vibrio cholerae serotype O1 (strain ATCC 39315 / El Tor Inaba N16961).